The sequence spans 152 residues: Ribosome maturation factor RimP (152 aa).

This sequence belongs to the RimP family.

Its subcellular location is the cytoplasm. Required for maturation of 30S ribosomal subunits. The protein is Ribosome maturation factor RimP of Alkalilimnicola ehrlichii (strain ATCC BAA-1101 / DSM 17681 / MLHE-1).